The primary structure comprises 363 residues: tRNA/tmRNA (uracil-C(5))-methyltransferase (363 aa).

5 residues coordinate S-adenosyl-L-methionine: Gln187, Tyr215, Asn220, Glu236, and Asp296. Cys321 (nucleophile) is an active-site residue. Catalysis depends on Glu355, which acts as the Proton acceptor.

It belongs to the class I-like SAM-binding methyltransferase superfamily. RNA M5U methyltransferase family. TrmA subfamily.

The catalysed reaction is uridine(54) in tRNA + S-adenosyl-L-methionine = 5-methyluridine(54) in tRNA + S-adenosyl-L-homocysteine + H(+). It carries out the reaction uridine(341) in tmRNA + S-adenosyl-L-methionine = 5-methyluridine(341) in tmRNA + S-adenosyl-L-homocysteine + H(+). Dual-specificity methyltransferase that catalyzes the formation of 5-methyluridine at position 54 (m5U54) in all tRNAs, and that of position 341 (m5U341) in tmRNA (transfer-mRNA). This chain is tRNA/tmRNA (uracil-C(5))-methyltransferase, found in Pseudomonas aeruginosa (strain ATCC 15692 / DSM 22644 / CIP 104116 / JCM 14847 / LMG 12228 / 1C / PRS 101 / PAO1).